Here is a 114-residue protein sequence, read N- to C-terminus: Fructose-bisphosphate aldolase 2 (114 aa).

35 to 38 serves as a coordination point for dihydroxyacetone phosphate; the sequence is NIDT.

This sequence belongs to the class II fructose-bisphosphate aldolase family. Homodimer. Requires Zn(2+) as cofactor.

It carries out the reaction beta-D-fructose 1,6-bisphosphate = D-glyceraldehyde 3-phosphate + dihydroxyacetone phosphate. Its pathway is carbohydrate biosynthesis; Calvin cycle. It participates in carbohydrate degradation; glycolysis; D-glyceraldehyde 3-phosphate and glycerone phosphate from D-glucose: step 4/4. Catalyzes the aldol condensation of dihydroxyacetone phosphate (DHAP or glycerone-phosphate) with glyceraldehyde 3-phosphate (G3P) to form fructose 1,6-bisphosphate (FBP) in gluconeogenesis and the reverse reaction in glycolysis. This is Fructose-bisphosphate aldolase 2 (cbbA) from Rhodobacter capsulatus (Rhodopseudomonas capsulata).